The chain runs to 240 residues: UDP-2,3-diacylglucosamine hydrolase (240 aa).

5 residues coordinate Mn(2+): Asp9, His11, Asp43, Asn81, and His116. 81–82 (NR) lines the substrate pocket. 5 residues coordinate substrate: Asp124, Ser162, Lys166, Lys169, and His197. Positions 197 and 199 each coordinate Mn(2+).

This sequence belongs to the LpxH family. Mn(2+) serves as cofactor.

Its subcellular location is the cell inner membrane. The catalysed reaction is UDP-2-N,3-O-bis[(3R)-3-hydroxytetradecanoyl]-alpha-D-glucosamine + H2O = 2-N,3-O-bis[(3R)-3-hydroxytetradecanoyl]-alpha-D-glucosaminyl 1-phosphate + UMP + 2 H(+). It participates in glycolipid biosynthesis; lipid IV(A) biosynthesis; lipid IV(A) from (3R)-3-hydroxytetradecanoyl-[acyl-carrier-protein] and UDP-N-acetyl-alpha-D-glucosamine: step 4/6. Hydrolyzes the pyrophosphate bond of UDP-2,3-diacylglucosamine to yield 2,3-diacylglucosamine 1-phosphate (lipid X) and UMP by catalyzing the attack of water at the alpha-P atom. Involved in the biosynthesis of lipid A, a phosphorylated glycolipid that anchors the lipopolysaccharide to the outer membrane of the cell. The polypeptide is UDP-2,3-diacylglucosamine hydrolase (Neisseria meningitidis serogroup B (strain ATCC BAA-335 / MC58)).